The chain runs to 161 residues: uncharacterized protein (161 aa).

In terms of assembly, interacts with ribosomes.

This is an uncharacterized protein from Saccharomyces cerevisiae (strain ATCC 204508 / S288c) (Baker's yeast).